The chain runs to 128 residues: Mini-ribonuclease 3 (128 aa).

Aspartate 17 is a catalytic residue.

The protein belongs to the MrnC RNase family. In terms of assembly, homodimer. It depends on Mg(2+) as a cofactor.

The protein resides in the cytoplasm. Involved in correct processing of both the 5' and 3' ends of 23S rRNA precursor. Processes 30S rRNA precursor transcript even in absence of ribonuclease 3 (Rnc); Rnc processes 30S rRNA into smaller rRNA precursors. This chain is Mini-ribonuclease 3, found in Streptococcus pneumoniae (strain ATCC BAA-255 / R6).